A 414-amino-acid polypeptide reads, in one-letter code: Protein IQ-DOMAIN 8 (414 aa).

The Nuclear localization signal 1 signature appears at 14 to 21 (NKKNITDD). A disordered region spans residues 40 to 61 (LISSSKGFKSRGGSYGTPSLGS). 3 consecutive IQ domains span residues 92-120 (REWA…AVVR), 121-143 (IQAI…CMQA), and 144-169 (LVRV…EKPS). Residues 119–132 (VRIQAIFRGRQVRK) form a calmodulin-binding region. Disordered regions lie at residues 156 to 190 (NRGP…SPGS), 218 to 244 (HQPR…SCKS), and 262 to 329 (GRLM…SGSF). Over residues 164–184 (ELEKPSDQQKDDPAKQAEKGW) the composition is skewed to basic and acidic residues. Positions 231–244 (KQGSVKKNNGSCKS) are enriched in polar residues. Over residues 274-289 (NARKSESSVSEHDTVQ) the composition is skewed to basic and acidic residues. The span at 307 to 328 (SSSATSSESSSTSQSPVPFSGS) shows a compositional bias: low complexity. The short motif at 336–343 (YRKPSYMS) is the Nuclear localization signal 2 element. The interval 347–398 (SIKAKQRRSGSSSSCSKTPFEKKQSMSYNGDVNVRRSAGSDPLNNQWTDLYP) is disordered.

It belongs to the IQD family. As to quaternary structure, binds to multiple calmodulin (CaM) in the presence of Ca(2+) and CaM-like proteins.

It is found in the nucleus. Its subcellular location is the cytoplasm. The protein localises to the cytoskeleton. The protein resides in the nucleus envelope. In terms of biological role, may be involved in cooperative interactions with calmodulins or calmodulin-like proteins. Recruits calmodulin proteins to microtubules, thus being a potential scaffold in cellular signaling and trafficking. May associate with nucleic acids and regulate gene expression at the transcriptional or post-transcriptional level. The sequence is that of Protein IQ-DOMAIN 8 from Arabidopsis thaliana (Mouse-ear cress).